We begin with the raw amino-acid sequence, 110 residues long: Parvalbumin alpha (110 aa).

Serine 2 carries the post-translational modification N-acetylserine. 2 positions are modified to phosphoserine: serine 2 and serine 24. 2 consecutive EF-hand domains span residues 39–74 and 78–110; these read KSPE…FSPD and LSVK…VAES. Ca(2+) is bound by residues aspartate 52, aspartate 54, serine 56, phenylalanine 58, glutamate 60, glutamate 63, aspartate 91, aspartate 93, aspartate 95, lysine 97, and glutamate 102.

This sequence belongs to the parvalbumin family.

Functionally, in muscle, parvalbumin is thought to be involved in relaxation after contraction. It binds two calcium ions. In Bos taurus (Bovine), this protein is Parvalbumin alpha (PVALB).